A 238-amino-acid chain; its full sequence is Survival of motor neuron-related-splicing factor 30 (238 aa).

In terms of domain architecture, Tudor spans 72 to 132; it reads SWKVGDKCMA…KPVEEGRKAK (61 aa). The short motif at 142–160 is the Nuclear localization signal element; the sequence is KKEMIAQQREYKKKKALKK. A Phosphoserine modification is found at Ser-201. Position 219 is an N6-acetyllysine (Lys-219).

It belongs to the SMN family. Associates with spliceosomes. Associates with U4/U5/U6 tri-snRNP and with U2 snRNP.

It localises to the nucleus speckle. The protein resides in the nucleus. It is found in the cajal body. In terms of biological role, involved in spliceosome assembly. The polypeptide is Survival of motor neuron-related-splicing factor 30 (SMNDC1) (Bos taurus (Bovine)).